Consider the following 253-residue polypeptide: Electron transfer flavoprotein subunit beta, mitochondrial (253 aa).

It belongs to the ETF beta-subunit/FixA family. In terms of assembly, heterodimer of an alpha and a beta subunit. It depends on FAD as a cofactor. The cofactor is AMP.

It is found in the mitochondrion matrix. Its function is as follows. The electron transfer flavoprotein serves as a specific electron acceptor for several dehydrogenases, including five acyl-CoA dehydrogenases, glutaryl-CoA and sarcosine dehydrogenase. It transfers the electrons to the main mitochondrial respiratory chain via ETF-ubiquinone oxidoreductase (ETF dehydrogenase). The chain is Electron transfer flavoprotein subunit beta, mitochondrial (ETFB) from Oryza sativa subsp. indica (Rice).